Here is a 907-residue protein sequence, read N- to C-terminus: Probable dipeptidyl-aminopeptidase B (907 aa).

A compositionally biased stretch (basic and acidic residues) spans 1 to 11 (MYDQVPYRDTD). A disordered region spans residues 1-71 (MYDQVPYRDT…RGKPDEDDDL (71 aa)). Topologically, residues 1-88 (MYDQVPYRDT…LKPMERKVRR (88 aa)) are cytoplasmic. Positions 22–36 (SDSNRSSIDTTSTTS) are enriched in low complexity. Residues 89 to 109 (AMYLLAFLMIGGWFLALAVYV) traverse the membrane as a helical; Signal-anchor for type II membrane protein segment. The Vacuolar portion of the chain corresponds to 110–907 (SREHFGTPDT…PLRKRNRELV (798 aa)). Asn185 and Asn341 each carry an N-linked (GlcNAc...) asparagine glycan. The Charge relay system role is filled by Ser746. A glycan (N-linked (GlcNAc...) asparagine) is linked at Asn800. Residues Asp823 and His856 each act as charge relay system in the active site.

It belongs to the peptidase S9B family.

The protein resides in the vacuole membrane. The enzyme catalyses Release of an N-terminal dipeptide, Xaa-Yaa-|-Zaa-, from a polypeptide, preferentially when Yaa is Pro, provided Zaa is neither Pro nor hydroxyproline.. Type IV dipeptidyl-peptidase which removes N-terminal dipeptides sequentially from polypeptides having unsubstituted N-termini provided that the penultimate residue is proline. This chain is Probable dipeptidyl-aminopeptidase B (DAPB), found in Tuber melanosporum (strain Mel28) (Perigord black truffle).